The following is a 590-amino-acid chain: Aspartate--tRNA(Asp/Asn) ligase (590 aa).

Glutamate 175 contacts L-aspartate. An aspartate region spans residues 199-202 (QQYK). Positions 221 and 450 each coordinate L-aspartate. 221-223 (RDE) is a binding site for ATP. An ATP-binding site is contributed by glutamate 484. An L-aspartate-binding site is contributed by arginine 491. 536–539 (GVDR) is an ATP binding site.

This sequence belongs to the class-II aminoacyl-tRNA synthetase family. Type 1 subfamily. In terms of assembly, homodimer.

Its subcellular location is the cytoplasm. The enzyme catalyses tRNA(Asx) + L-aspartate + ATP = L-aspartyl-tRNA(Asx) + AMP + diphosphate. In terms of biological role, aspartyl-tRNA synthetase with relaxed tRNA specificity since it is able to aspartylate not only its cognate tRNA(Asp) but also tRNA(Asn). Reaction proceeds in two steps: L-aspartate is first activated by ATP to form Asp-AMP and then transferred to the acceptor end of tRNA(Asp/Asn). The chain is Aspartate--tRNA(Asp/Asn) ligase from Rhodopseudomonas palustris (strain BisB18).